The primary structure comprises 822 residues: Putative endoplasmic reticulum metallopeptidase 1 (822 aa).

At 1–14 the chain is on the cytoplasmic side; the sequence is MVLVCASSSKCKRN. The chain crosses the membrane as a helical span at residues 15-35; that stretch reads TFLQLAMVLFAVVMARIALYF. The Lumenal segment spans residues 36–365; sequence HNHLDEPLVD…FNSLFFMYSK (330 aa). Asparagine 146 carries N-linked (GlcNAc...) asparagine glycosylation. Zn(2+) contacts are provided by histidine 161 and aspartate 173. The active-site Proton acceptor is the glutamate 207. Residues glutamate 208 and glutamate 234 each coordinate Zn(2+). N-linked (GlcNAc...) asparagine glycosylation is present at asparagine 291. Residue histidine 307 coordinates Zn(2+). A helical transmembrane segment spans residues 366–384; the sequence is LTSKILNTLVGGLGILLTL. Topologically, residues 385–392 are cytoplasmic; it reads RGSEGSFT. A helical membrane pass occupies residues 393–413; sequence VALIAQVISIAGIFVIPNIWA. Over 414–431 the chain is Lumenal; that stretch reads YILGNVLDCGMSWFRNEY. The helical transmembrane segment at 432–452 threads the bilayer; the sequence is WPLFIYLPAIFASLFFTESLF. Residues 453 to 463 are Cytoplasmic-facing; sequence KRSEHLALRAT. Residues 464–484 traverse the membrane as a helical segment; the sequence is IFIFSLLTFIPLPSAYLFTII. Aspartate 485 is a topological domain (lumenal). Residues 486-506 form a helical membrane-spanning segment; sequence FFMVFALFLNDKILAKPGTVH. Residues 507–514 lie on the Cytoplasmic side of the membrane; it reads PLTYFIGS. The helical transmembrane segment at 515–535 threads the bilayer; sequence IGAMTVGFESAINLLEIFVPL. Residues 536–547 are Lumenal-facing; the sequence is TGRIGTDKVADN. A helical membrane pass occupies residues 548–568; that stretch reads VVATVCVCGFNIYFPLMSPWI. The Cytoplasmic segment spans residues 569–575; that stretch reads QRFRSRC. A helical transmembrane segment spans residues 576-596; it reads CFRLGLLFSIFVVGFSSFILA. Topologically, residues 597–822 are lumenal; the sequence is KQDTYYDSLH…GVVSGNFKLE (226 aa). N-linked (GlcNAc...) asparagine glycans are attached at residues asparagine 617, asparagine 682, asparagine 706, and asparagine 758.

It belongs to the peptidase M28 family. M28B subfamily. Zn(2+) serves as cofactor.

It localises to the endoplasmic reticulum membrane. This Schizosaccharomyces pombe (strain 972 / ATCC 24843) (Fission yeast) protein is Putative endoplasmic reticulum metallopeptidase 1.